A 449-amino-acid chain; its full sequence is Phosphoglucosamine mutase (449 aa).

Ser100 functions as the Phosphoserine intermediate in the catalytic mechanism. Residues Ser100, Asp241, Asp243, and Asp245 each coordinate Mg(2+). Ser100 carries the post-translational modification Phosphoserine.

This sequence belongs to the phosphohexose mutase family. Requires Mg(2+) as cofactor. In terms of processing, activated by phosphorylation.

It carries out the reaction alpha-D-glucosamine 1-phosphate = D-glucosamine 6-phosphate. Catalyzes the conversion of glucosamine-6-phosphate to glucosamine-1-phosphate. This Clostridium botulinum (strain Langeland / NCTC 10281 / Type F) protein is Phosphoglucosamine mutase.